Reading from the N-terminus, the 195-residue chain is Imidazoleglycerol-phosphate dehydratase (195 aa).

It belongs to the imidazoleglycerol-phosphate dehydratase family.

Its subcellular location is the cytoplasm. It catalyses the reaction D-erythro-1-(imidazol-4-yl)glycerol 3-phosphate = 3-(imidazol-4-yl)-2-oxopropyl phosphate + H2O. It participates in amino-acid biosynthesis; L-histidine biosynthesis; L-histidine from 5-phospho-alpha-D-ribose 1-diphosphate: step 6/9. The polypeptide is Imidazoleglycerol-phosphate dehydratase (Beijerinckia indica subsp. indica (strain ATCC 9039 / DSM 1715 / NCIMB 8712)).